The chain runs to 1651 residues: Alsin (1651 aa).

3 RCC1 repeats span residues 59 to 108, 109 to 167, and 169 to 218; these read DGEV…AVTE, SGVV…ALSI, and REIW…ALVQ. The interval 444–476 is disordered; the sequence is REEQVKQESLQGKKSSSLMDIREEESEGGSRRL. The span at 450–461 shows a compositional bias: polar residues; it reads QESLQGKKSSSL. Phosphoserine occurs at positions 459, 460, 477, and 486. Thr-504 carries the phosphothreonine modification. 2 RCC1 repeats span residues 519–570 and 572–621; these read RTEV…ALTA and SQVY…FLVD. Lys-527 bears the N6-acetyllysine mark. Positions 684–879 constitute a DH domain; it reads GYIASLHELA…ESLALHLGKK (196 aa). Positions 895–1001 constitute a PH domain; it reads GKMTDSLRKP…RAISQAVDQA (107 aa). MORN repeat units follow at residues 1043–1065, 1066–1088, 1094–1116, 1117–1139, 1145–1167, 1169–1191, 1192–1214, and 1215–1238; these read YDGR…DGKV, YSGT…NKAL, YVGH…SGEV, FEGC…KLTS, FIGQ…TRGE, YMGM…FGLY, YEGN…DDTI, and YEGE…NGDY. A Phosphoserine modification is found at Ser-1329. Positions 1507–1651 constitute a VPS9 domain; that stretch reads KQPDIALLGF…YYQIQREKLN (145 aa).

Forms a heteromeric complex with ALS2CL. Interacts with ALS2CL.

Its function is as follows. May act as a GTPase regulator. Controls survival and growth of spinal motoneurons. The protein is Alsin (Als2) of Rattus norvegicus (Rat).